The chain runs to 259 residues: UBX domain-containing protein 2A (259 aa).

The tract at residues Met-1–Ala-151 is required for interaction with CHRNA3. Positions Met-1–Ala-164 are required for inhibition of CHRNA3 ubiquitination and translocation of CHRNA3 to the plasma membrane resulting in an increase in acetylcholine-gated nicotinic acetylcholine receptor currents. In terms of domain architecture, SEP spans Gln-60 to Leu-124. Residues Leu-167–His-259 are required for interaction with VCP. Positions Asn-169–Arg-246 constitute a UBX domain.

In terms of assembly, part of a complex composed of STUB1/CHIP, VCP/p97, CHRNA3, and UBXN2A that modulates the ubiquitination and endoplasmic reticulum-associated degradation (ERAD) of CHRNA3. Within the complex UBXN2A acts as a scaffold protein required for the interaction of CHRNA3 with VCP/p97, this interaction also inhibits CHRNA3 ubiquitination by STUB1/CHIP and subsequently ERAD. Interacts (via SEP domain) with CHRNA3 and interacts (via UBX domain) with VCP/P97; these interactions are required for the interaction of CHRNA3 with the STUB1-VCP-UBXN2A complex. Interacts with HSPA9/MOT-2 (via SBD domain); the interaction inhibits HSPA9/MOT-2 interaction with and degradation of p53, thereby promotes p53 translocation to the nucleus. Interacts with RICTOR. Post-translationally, ubiquitinated. In terms of tissue distribution, expressed in the colon (at protein level).

Its subcellular location is the golgi apparatus. The protein resides in the endoplasmic reticulum. It is found in the perikaryon. It localises to the cell projection. The protein localises to the dendrite. Its subcellular location is the nucleus. The protein resides in the cytoplasm. In terms of biological role, acts to repress the ubiquitination and subsequent endoplasmic reticulum-associated degradation of CHRNA3 by the STUB1-VCP-UBXN2A complex in cortical neurons. Also acts to promote the translocation of CHRNA3 to the plasma membrane and subsequently increases plasma membrane acetylcholine-gated ion-channel activation. Plays a role in the inhibition of STUB1-mediated TP53 degradation, via its interaction with HSPA9 which acts to inhibit TP53 binding to HSPA9. Positively mediates the ubiquitination and proteosomal degradation of RICTOR, may thereby act as a negative regulator of the mTORC2 pathway. This Homo sapiens (Human) protein is UBX domain-containing protein 2A.